The chain runs to 475 residues: B-type cell cycle switch protein ccs52A (475 aa).

Residues 1–29 (MDGTGNRNPPPTSTVGDNSPPPEPSPESL) form a disordered region. Positions 7 to 28 (RNPPPTSTVGDNSPPPEPSPES) match the PEST motif motif. A phosphoserine mark is found at serine 43 and serine 45. Positions 51-57 (DRFIPSR) match the C-box motif. A CSM motif motif is present at residues 80–91 (AYTTLLRTALFG). Phosphothreonine is present on threonine 99. Phosphoserine occurs at positions 144 and 155. WD repeat units follow at residues 166–203 (QDDFYLNLVDWSSHNVLAVGLGNCVYLWNACSSKVTKL), 207–246 (GVDDCVCSVGWAQRGTHLAVGTNNGKVQIWDAARCKKIRS), 249–289 (GHRL…SKLS), 290–329 (GHKSEVCGLKWSYDNRELASGGNDNKLFVWNQHSTQPVLK), 332–374 (EHTA…HLSC), 376–417 (DTGS…KLAT), and 420–459 (GHTYRVLYLAISPDGQTIVTGAGDETLRFWNVFPSPKSQN). Serine 454 is subject to Phosphoserine.

Belongs to the WD repeat CDC20/Fizzy family. As to expression, mostly expressed in nodules, and, to a lower extent, in root tips, stems, hypocotyls, leaves, flower buds and flowers.

It is found in the nucleus. The protein operates within protein modification; protein ubiquitination. Functionally, component of the anaphase promoting complex/cyclosome (APC/C), a cell cycle-regulated E3 ubiquitin-protein ligase complex that controls progression through mitosis and the G1 phase of the cell cycle. Required to switch form cell proliferation to cell differentiation, endoreduplication and ploidy-dependent cell enlargement, including during nodulation, before nodule differentiation. Involved in root-knot nematode Meloidogyne incognita giant cells formation. The chain is B-type cell cycle switch protein ccs52A from Medicago truncatula (Barrel medic).